Reading from the N-terminus, the 357-residue chain is Alanine racemase (357 aa).

The Proton acceptor; specific for D-alanine role is filled by lysine 33. At lysine 33 the chain carries N6-(pyridoxal phosphate)lysine. Residue arginine 129 coordinates substrate. Tyrosine 253 (proton acceptor; specific for L-alanine) is an active-site residue. Methionine 301 serves as a coordination point for substrate.

This sequence belongs to the alanine racemase family. The cofactor is pyridoxal 5'-phosphate.

The enzyme catalyses L-alanine = D-alanine. It participates in amino-acid biosynthesis; D-alanine biosynthesis; D-alanine from L-alanine: step 1/1. Catalyzes the interconversion of L-alanine and D-alanine. May also act on other amino acids. This chain is Alanine racemase (alr), found in Pseudomonas savastanoi pv. phaseolicola (strain 1448A / Race 6) (Pseudomonas syringae pv. phaseolicola (strain 1448A / Race 6)).